We begin with the raw amino-acid sequence, 98 residues long: DNA-binding protein Fis (98 aa).

A DNA-binding region (H-T-H motif) is located at residues 74-93 (QTRAATMMGINRGTLRKKLK).

This sequence belongs to the transcriptional regulatory Fis family. Homodimer.

In terms of biological role, activates ribosomal RNA transcription. Plays a direct role in upstream activation of rRNA promoters. This chain is DNA-binding protein Fis, found in Vibrio parahaemolyticus serotype O3:K6 (strain RIMD 2210633).